The sequence spans 499 residues: Endoglucanase 3 (499 aa).

The first 19 residues, 1–19 (MALLRCLFLLAVLLPHRNA), serve as a signal peptide directing secretion. Catalysis depends on D88, which acts as the Nucleophile. Residues H416, D467, and E476 contribute to the active site.

The protein belongs to the glycosyl hydrolase 9 (cellulase E) family. Expressed in flowers.

Its subcellular location is the secreted. It catalyses the reaction Endohydrolysis of (1-&gt;4)-beta-D-glucosidic linkages in cellulose, lichenin and cereal beta-D-glucans.. The sequence is that of Endoglucanase 3 (GLU8) from Oryza sativa subsp. japonica (Rice).